The sequence spans 201 residues: Proteasome subunit beta 1 (201 aa).

Methionine 1 is a propeptide (removed in mature form; by autocatalysis). Catalysis depends on threonine 2, which acts as the Nucleophile.

The protein belongs to the peptidase T1B family. In terms of assembly, the 20S proteasome core is composed of 14 alpha and 14 beta subunits that assemble into four stacked heptameric rings, resulting in a barrel-shaped structure. The two inner rings, each composed of seven catalytic beta subunits, are sandwiched by two outer rings, each composed of seven alpha subunits. The catalytic chamber with the active sites is on the inside of the barrel. Has a gated structure, the ends of the cylinder being occluded by the N-termini of the alpha-subunits. Is capped at one or both ends by the proteasome regulatory ATPase, PAN.

Its subcellular location is the cytoplasm. It carries out the reaction Cleavage of peptide bonds with very broad specificity.. The formation of the proteasomal ATPase PAN-20S proteasome complex, via the docking of the C-termini of PAN into the intersubunit pockets in the alpha-rings, triggers opening of the gate for substrate entry. Interconversion between the open-gate and close-gate conformations leads to a dynamic regulation of the 20S proteasome proteolysis activity. In terms of biological role, component of the proteasome core, a large protease complex with broad specificity involved in protein degradation. This Pyrobaculum calidifontis (strain DSM 21063 / JCM 11548 / VA1) protein is Proteasome subunit beta 1.